The chain runs to 133 residues: Large ribosomal subunit protein bL17 (133 aa).

Belongs to the bacterial ribosomal protein bL17 family. Part of the 50S ribosomal subunit. Contacts protein L32.

This chain is Large ribosomal subunit protein bL17, found in Idiomarina loihiensis (strain ATCC BAA-735 / DSM 15497 / L2-TR).